A 740-amino-acid chain; its full sequence is MQPPPRKVKVTQELRNIQGEQMTKLQAKHQAECDLLEDMRTFSQKKAAIEREYAQGIQKLASQYLKRDWPGIKTDDRNDYRSMYPVWKSFLEGTMQVAQSRINICENYKNFISEPARAVRSLKEQQLKRCVDQLTKIQTELQETVKDLVKGKKKYFETEQMAHAVREKADIEAKSKLSLFQSRISLQKASVKLKARRSECNTKATHARNDYLLTLAAANAHQDRYYQTDLVNIMKALDGNVYDHLKDYLIAFSRTELETCQAIQNTFQFLLENSSKVVRDYNLQLFLQENAVFHKPQPFQFQPCDSDTSRQLESETGTTEEHSLNKEARKWATRVAREHKNIVHQQRVLNELECHGVALSEQSRAELEQKIDEARESIRKAEIIKLKAEARLDLLKQIGVSVDTWLKSAMNQVMEELENERWARPPAVTSNGTLHSLNADAEREEGEEFEDNMDVFDDSSSSPSGTLRNYPLTCKVVYSYKASQPDELTIEEHEVLEVIEDGDMEDWVKARNKVGQVGYVPEKYLQFPTSNSLLSMLQSLAALDSRSHTSSNSTEAELVSGSLNGDASVCFVKALYDYEGQTDDELSFPEGAIIRILNKENQDDDGFWEGEFSGRIGVFPSVLVEELSASENGDTPWTREIQISPSPKPHTSLPPLPLYDQPPSSPYPSPDKRSSQFFPRSPSANENSLHAESPGFSQASRQTPDTSYGKLRPVRAAPPPPTQNHRRTTEKMEDVEITLV.

The F-BAR domain maps to 8-282 (VKVTQELRNI…NSSKVVRDYN (275 aa)). Positions 303–323 (PCDSDTSRQLESETGTTEEHS) are disordered. Positions 307-323 (DTSRQLESETGTTEEHS) are enriched in basic and acidic residues. The stretch at 356–397 (GVALSEQSRAELEQKIDEARESIRKAEIIKLKAEARLDLLKQ) forms a coiled coil. 2 consecutive SH3 domains span residues 469–530 (NYPL…FPTS) and 567–629 (ASVC…ELSA). Residues 567-629 (ASVCFVKALY…PSVLVEELSA (63 aa)) are required and sufficient for location at clathrin-coated pits. Residues 629–645 (ASENGDTPWTREIQISP) show a composition bias toward polar residues. The disordered stretch occupies residues 629–740 (ASENGDTPWT…KMEDVEITLV (112 aa)). Positions 646-657 (SPKPHTSLPPLP) are enriched in pro residues. Phosphoserine occurs at positions 675 and 681. The segment covering 675–706 (SQFFPRSPSANENSLHAESPGFSQASRQTPDT) has biased composition (polar residues).

In terms of assembly, homodimer. Interacts (via SH3 domain 2) with ITSN1 (via SH3 domain 4). Recruited to clathrin-coated pits during a mid-to-late stage of assembly via interaction with ITSN1. Interacts (via SH3 domain 1) with WASL. Interacts with WAS. Interacts with CASK and MAGI1. CASK inhibits interaction with MAGI1. Post-translationally, phosphorylated. Phosphorylation on a Ser residue is important for recruitment to the cell membrane and for its role in promoting endocytosis. Detected in inner ear vestibula and in stereocilia in cochlear hair cell bundles (at protein level). Ubiquitous. Detected in testis, liver, brain cortex, cerebellum, kidney, organ of Corti, utricle, spiral ganglion, tongue and eye.

It is found in the cytoplasm. The protein resides in the cell junction. The protein localises to the membrane. Its subcellular location is the clathrin-coated pit. It localises to the cell membrane. It is found in the cell projection. The protein resides in the stereocilium. Functionally, adapter protein that plays a role in endocytosis via clathrin-coated pits. Contributes to the internalization of cell surface receptors, such as integrin ITGB1 and transferrin receptor. Promotes endocytosis of EGFR in cancer cells, and thereby contributes to the down-regulation of EGFR signaling. Recruited to clathrin-coated pits during a mid-to-late stage of assembly, where it is required for normal progress from U-shaped intermediate stage pits to terminal, omega-shaped pits. Binds to membranes enriched in phosphatidylinositol 3,4-bisphosphate or phosphatidylinositol 3,4,5-trisphosphate. When bound to membranes, promotes actin polymerization via its interaction with WAS and/or WASL which leads to the activation of the Arp2/3 complex. Does not promote actin polymerisation in the absence of membranes. The sequence is that of F-BAR and double SH3 domains protein 2 (Fchsd2) from Mus musculus (Mouse).